Reading from the N-terminus, the 530-residue chain is Probable histone-arginine methyltransferase CARMER (530 aa).

The SAM-dependent MTase PRMT-type domain occupies 141–450 (ASQYFQFYGY…QSYDVTIDLH (310 aa)). The S-adenosyl-L-methionine site is built by Gln154, Arg163, Gly187, Glu209, Glu238, and Thr266. Asymmetric dimethylarginine; by autocatalysis is present on Arg501.

This sequence belongs to the class I-like SAM-binding methyltransferase superfamily. Protein arginine N-methyltransferase family. Homodimer. Interacts with EcR. Post-translationally, the dimethylated protein is the major form. As to expression, present ubiquitously (at protein level). Expressed in the imaginal disks and in larval brains, and to a much lesser degree in the polytene larval tissue such as salivary glands.

It localises to the cytoplasm. It is found in the nucleus. It carries out the reaction L-arginyl-[protein] + 2 S-adenosyl-L-methionine = N(omega),N(omega)-dimethyl-L-arginyl-[protein] + 2 S-adenosyl-L-homocysteine + 2 H(+). Functionally, methylates (mono- and asymmetric dimethylation) the guanidino nitrogens of arginyl residues in proteins. May methylate histone H3 at 'Arg-17' and activate transcription via chromatin remodeling. Coordinates ecdysone-mediated expression of cell death genes. In Drosophila melanogaster (Fruit fly), this protein is Probable histone-arginine methyltransferase CARMER (Art4).